A 346-amino-acid chain; its full sequence is Putative D-alanine--D-lactate ligase (346 aa).

In terms of domain architecture, ATP-grasp spans tyrosine 137–serine 338. An ATP-binding site is contributed by arginine 163–glycine 216. Mg(2+)-binding residues include aspartate 292, glutamate 305, and asparagine 307.

This sequence belongs to the D-alanine--D-alanine ligase family. It depends on Mg(2+) as a cofactor. Mn(2+) is required as a cofactor.

It is found in the cell membrane. Its function is as follows. Required for resistance to glycopeptides antibiotics. D-Ala--D-Ala ligase of altered specificity which catalyzes ester bond formation between D-Ala and various D-hydroxy acids; producing a peptidoglycan which does not terminate by D-alanine but by D-lactate, thus preventing vancomycin binding. The chain is Putative D-alanine--D-lactate ligase from Streptomyces coelicolor (strain ATCC BAA-471 / A3(2) / M145).